Here is a 109-residue protein sequence, read N- to C-terminus: Large ribosomal subunit protein bL31B (109 aa).

A disordered region spans residues 79–109 (NVRQPAQQPQPEEDALPAAKGKKKVVTKKKK). Over residues 98-109 (KGKKKVVTKKKK) the composition is skewed to basic residues.

This sequence belongs to the bacterial ribosomal protein bL31 family. Type B subfamily. As to quaternary structure, part of the 50S ribosomal subunit.

The sequence is that of Large ribosomal subunit protein bL31B from Chlamydia pneumoniae (Chlamydophila pneumoniae).